Here is a 236-residue protein sequence, read N- to C-terminus: LexA repressor (236 aa).

Positions 26-46 (FDEMKDALDLRSKSGIHRLIT) form a DNA-binding region, H-T-H motif. Residues 85 to 109 (PSVIEGNLGKVRPPSPTPAEDDHDR) are disordered. Active-site for autocatalytic cleavage activity residues include Ser-157 and Lys-195.

Belongs to the peptidase S24 family. Homodimer.

The catalysed reaction is Hydrolysis of Ala-|-Gly bond in repressor LexA.. In terms of biological role, represses a number of genes involved in the response to DNA damage (SOS response), including recA and lexA. In the presence of single-stranded DNA, RecA interacts with LexA causing an autocatalytic cleavage which disrupts the DNA-binding part of LexA, leading to derepression of the SOS regulon and eventually DNA repair. This is LexA repressor from Rhodopseudomonas palustris (strain ATCC BAA-98 / CGA009).